Reading from the N-terminus, the 502-residue chain is Cytochrome P450 71B10 (502 aa).

Residues 1-21 (MTVLWFVSLILLISILLVAVK) form a helical membrane-spanning segment. Heme is bound at residue C443.

The protein belongs to the cytochrome P450 family. Requires heme as cofactor.

It localises to the membrane. This Arabidopsis thaliana (Mouse-ear cress) protein is Cytochrome P450 71B10 (CYP71B10).